Consider the following 428-residue polypeptide: Forkhead box protein B2 (428 aa).

Residues 12–103 (QKPPYSYISL…GDMFENGSFL (92 aa)) constitute a DNA-binding region (fork-head). Disordered regions lie at residues 118-217 (HLHS…MQEA) and 408-428 (PTAA…LVHS). Residues 136–163 (LHPHHPHHAHHHHHHHHHAAHHHHHHHP) show a composition bias toward basic residues. 2 stretches are compositionally biased toward pro residues: residues 164 to 174 (PQPPPPPPPHM) and 183 to 192 (APAPQPPHLP). Residues 193–217 (SQPAQQPQPQSQPPQTSHPGKMQEA) show a composition bias toward low complexity.

Its subcellular location is the nucleus. Transcription factor. In Mus musculus (Mouse), this protein is Forkhead box protein B2 (Foxb2).